An 89-amino-acid polypeptide reads, in one-letter code: Small ribosomal subunit protein uS17 (89 aa).

Belongs to the universal ribosomal protein uS17 family. As to quaternary structure, part of the 30S ribosomal subunit.

One of the primary rRNA binding proteins, it binds specifically to the 5'-end of 16S ribosomal RNA. This Nocardia farcinica (strain IFM 10152) protein is Small ribosomal subunit protein uS17.